A 66-amino-acid polypeptide reads, in one-letter code: Large ribosomal subunit protein bL31 (66 aa).

Residues cysteine 16, cysteine 18, cysteine 36, and cysteine 39 each contribute to the Zn(2+) site.

This sequence belongs to the bacterial ribosomal protein bL31 family. Type A subfamily. As to quaternary structure, part of the 50S ribosomal subunit. Requires Zn(2+) as cofactor.

In terms of biological role, binds the 23S rRNA. The sequence is that of Large ribosomal subunit protein bL31 from Trichlorobacter lovleyi (strain ATCC BAA-1151 / DSM 17278 / SZ) (Geobacter lovleyi).